Here is a 152-residue protein sequence, read N- to C-terminus: Acyl carrier protein, mitochondrial (152 aa).

The Carrier domain occupies 73 to 148 (KLINERVLLV…DIIKYVADKE (76 aa)). At serine 108 the chain carries O-(pantetheine 4'-phosphoryl)serine.

It belongs to the acyl carrier protein (ACP) family. In terms of assembly, complex I is composed of about 45 different subunits.

The protein resides in the mitochondrion. In terms of biological role, carrier of the growing fatty acid chain in fatty acid biosynthesis. Accessory and non-catalytic subunit of the mitochondrial membrane respiratory chain NADH dehydrogenase (Complex I), which functions in the transfer of electrons from NADH to the respiratory chain. The chain is Acyl carrier protein, mitochondrial from Drosophila melanogaster (Fruit fly).